An 874-amino-acid chain; its full sequence is Alanine--tRNA ligase (874 aa).

Zn(2+) is bound by residues His563, His567, Cys665, and His669.

Belongs to the class-II aminoacyl-tRNA synthetase family. It depends on Zn(2+) as a cofactor.

The protein resides in the cytoplasm. It catalyses the reaction tRNA(Ala) + L-alanine + ATP = L-alanyl-tRNA(Ala) + AMP + diphosphate. Functionally, catalyzes the attachment of alanine to tRNA(Ala) in a two-step reaction: alanine is first activated by ATP to form Ala-AMP and then transferred to the acceptor end of tRNA(Ala). Also edits incorrectly charged Ser-tRNA(Ala) and Gly-tRNA(Ala) via its editing domain. The chain is Alanine--tRNA ligase from Aeromonas salmonicida (strain A449).